Consider the following 795-residue polypeptide: Phenylalanine--tRNA ligase beta subunit (795 aa).

The tRNA-binding domain maps to 39–148 (AGSFHGVVVG…ADAPIGTDIR (110 aa)). The 76-residue stretch at 401-476 (PKRATITLRR…RVYGYNNIPD (76 aa)) folds into the B5 domain. Aspartate 454, aspartate 460, glutamate 463, and glutamate 464 together coordinate Mg(2+). The FDX-ACB domain occupies 701–794 (SRFPANRRDI…LKERFQASLR (94 aa)).

It belongs to the phenylalanyl-tRNA synthetase beta subunit family. Type 1 subfamily. In terms of assembly, tetramer of two alpha and two beta subunits. It depends on Mg(2+) as a cofactor.

The protein localises to the cytoplasm. The catalysed reaction is tRNA(Phe) + L-phenylalanine + ATP = L-phenylalanyl-tRNA(Phe) + AMP + diphosphate + H(+). The chain is Phenylalanine--tRNA ligase beta subunit from Escherichia coli O157:H7.